The following is a 640-amino-acid chain: Dextranase (640 aa).

A signal peptide spans 1-32; sequence MPGTGLGRLAKRMTAAAAVFFISTSAVLPAQA. A propeptide spanning residues 33–49 is cleaved from the precursor; sequence ATAPAAAPPGVPAALKA. Residues 248–269 are disordered; that stretch reads EQKERLVPTEESGSIHYPEPGE.

It belongs to the glycosyl hydrolase 49 family.

It localises to the secreted. It catalyses the reaction Endohydrolysis of (1-&gt;6)-alpha-D-glucosidic linkages in dextran.. Functionally, efficiently decomposes water-insoluble glucan as well as dextran. The sequence is that of Dextranase from Arthrobacter sp. (strain CB-8).